A 147-amino-acid chain; its full sequence is METLAAIGRWLSKQHVVTWCVSRDDELWCANAFYVYDQDTVAFYLLSDEHTRHGQMTGERAKVAGTVNGQPKTVALIRGVQFKGEIRRLSGDEEARMRQRYVKRFPVARMLSAPVWEIRPDEIKFTDNTLGFGKKLHWRRDAGAEQA.

Belongs to the UPF0306 family.

This chain is UPF0306 protein KPK_0562, found in Klebsiella pneumoniae (strain 342).